The primary structure comprises 459 residues: Fibrous sheath-interacting protein 1 (459 aa).

Residues 1 to 54 form a disordered region; it reads MDITKGSLDEIARPASSSRSRPGSRVSTSLSTEKPKRSSTSLSLEILNPEPGFS. Low complexity predominate over residues 13-29; the sequence is RPASSSRSRPGSRVSTS. A coiled-coil region spans residues 162–202; that stretch reads KMERAIKRMQALDDILQRKLAKEKEVKAQGLEIRIKLWEEL. Positions 252 to 289 are disordered; it reads QLPNEDPVEDDDHKTLQGNMTGADSSDRSDCKTRHSKG. A compositionally biased stretch (basic and acidic residues) spans 276-289; the sequence is SSDRSDCKTRHSKG.

This sequence belongs to the FSIP1 family.

The polypeptide is Fibrous sheath-interacting protein 1 (fsip1) (Xenopus laevis (African clawed frog)).